The primary structure comprises 298 residues: Cyclin-C (298 aa).

The 117-residue stretch at 46–162 (NFITAVATEC…ILDCCLVVHH (117 aa)) folds into the Cyclin N-terminal domain. The disordered stretch occupies residues 278-298 (KLPKPNTPIPPPQQQQSSYHM).

The protein belongs to the cyclin family. Cyclin C subfamily. In terms of assembly, component of the Mediator complex.

Its subcellular location is the nucleus. Its function is as follows. Component of the Mediator complex, a coactivator involved in regulated gene transcription of nearly all RNA polymerase II-dependent genes. Mediator functions as a bridge to convey information from gene-specific regulatory proteins to the basal RNA polymerase II transcription machinery. Mediator is recruited to promoters by direct interactions with regulatory proteins and serves as a scaffold for the assembly of a functional preinitiation complex with RNA polymerase II and the general transcription factors. Binds to and activates cyclin-dependent kinase cdk-8 that phosphorylates the CTD (C-terminal domain) of the large subunit of RNA polymerase II (RNAp II), which may inhibit the formation of a transcription initiation complex. In Caenorhabditis briggsae, this protein is Cyclin-C (cic-1).